Consider the following 660-residue polypeptide: MGPRPILLLFLMFLPMLLAPPPGQPSGRRRGRRSGGSGGGFWGDRVDSQPFAIPYIHPTNPFAPNVTAAAGAGPRVRQPVRPLGSAWRDQAQRPAAASRRRPTTAGAAPLTAVAPAHDTPPVPDVDSRGAILRRQYNLSTSPLTSSVATGTNLVLYAAPLSPLLPLQDGTNTHIMATEASNYAQYRVARATIRYRPLVPNAVGGYAISISFWPQTTPTPTSVDMNSITSTDVRILVQPGIASELVIPSERLHYRNQGWRSVETSGVAEEEATSGLVMLCIHGSPVNSYTNTPYTGALGLLDFALELEFRNLTPGNTNTRVSRYSSTARHRLRRGADGTAELTTTAATRFMKDLYFTSTNGVGEIGRGIALTLFNLADTLLGGLPTELISSAGGQLFYSRPVVSANGEPTVKLYTSVENAQQDKGIAIPNDIDLGESRVVIQDYDNQHEQDRPTPSPAPSRPFSVLRANDVLWLSLTAAEYDQSTYGSSTGPVYVSDSVTLVNVATGAQAVARSLDWTKVTLDGRPLSTIQQYSKIFFVLPLRGKLSFWEAGTTRPGYPYNYNTTASDQLLVENAAGHRVAISTYTTSLGAGPVSISAVAVLGPHSALALLEDTLDYPARAHTFDDFCPECRPLGLQGCAFQSTVAELQRLKMKVGKTREL.

Residues 1–19 form the signal peptide; the sequence is MGPRPILLLFLMFLPMLLA. Disordered regions lie at residues 20–43 and 66–127; these read PPPG…GFWG and VTAA…DVDS. Positions 28–33 match the Nuclear localization signal motif; that stretch reads RRRGRR. Over residues 92-116 the composition is skewed to low complexity; the sequence is QRPAAASRRRPTTAGAAPLTAVAPA. Residues Asn137 and Asn310 are each glycosylated (N-linked (GlcNAc...) asparagine; by host). Residues 368 to 394 form a particle formation region; the sequence is IALTLFNLADTLLGGLPTELISSAGGQ. Asn562 carries an N-linked (GlcNAc...) asparagine; by host glycan. Residues 585–610 form an oligomerization region; the sequence is TTSLGAGPVSISAVAVLGPHSALALL.

It belongs to the hepevirus capsid protein family. Homodimer. In terms of assembly, self-assembles to form the capsid. The capsid is dominated by dimers that define the 30 morphological units. Interacts with phosphorylated protein ORF3. Interacts with host TMEM134. Interacts with host ASGR1 and ASGR2; these interactions facilitate infection of host hepatocytes. Post-translationally, cleaved by host protease in the N-terminus. In terms of processing, N-glycosylated. Not N-glycosylated. The C-terminus of the capsid protein ORF2 is truncated in non-enveloped virions shedded in feces, probably due to host proteases.

It is found in the secreted. Its subcellular location is the virion. It localises to the host cytoplasm. The protein localises to the host endoplasmic reticulum. The protein resides in the host Golgi apparatus. It is found in the host cell surface. Its function is as follows. Plays a role in the inhibition of host antibody-mediated neutralization without blocking viral cell entry. In terms of biological role, forms an icosahedral capsid with a T=1 symmetry and a 34 nm diameter. The capsid is composed of 60 copies linked to each other. Binds to the 5' end of the genomic RNA to mediate genome encapsidation. Binds to heparin surface proteoglycans (HSPGs) to mediate viral entry. Additionally, the interactions with host ASGR1 and ASGR2 facilitate viral infection of hepatocytes. Inhibits IFN production by blocking host TBK1-induced IRF3 phosphorylation. The nuclear form probably modulates host gene expression. The polypeptide is Pro-secreted protein ORF2 (Bandicota bengalensis (lesser bandicoot rat)).